The chain runs to 379 residues: GDSL esterase/lipase At3g05180 (379 aa).

A signal peptide spans 1 to 27; it reads METLFHTLLRLLLFVAISHTLSPLAGS. Residue Ser-43 is the Nucleophile of the active site. Residues Asn-294 and Asn-330 are each glycosylated (N-linked (GlcNAc...) asparagine). Catalysis depends on residues Asp-349 and His-352.

This sequence belongs to the 'GDSL' lipolytic enzyme family.

It is found in the secreted. In Arabidopsis thaliana (Mouse-ear cress), this protein is GDSL esterase/lipase At3g05180.